A 173-amino-acid chain; its full sequence is dCTP deaminase, dUMP-forming (173 aa).

DCTP-binding positions include Arg-93–Arg-98, Asp-111, Thr-119–Glu-121, and Gln-138. The active-site Proton donor/acceptor is the Glu-121.

Belongs to the dCTP deaminase family. Homotrimer.

It carries out the reaction dCTP + 2 H2O = dUMP + NH4(+) + diphosphate. It participates in pyrimidine metabolism; dUMP biosynthesis; dUMP from dCTP: step 1/1. In terms of biological role, bifunctional enzyme that catalyzes both the deamination of dCTP to dUTP and the hydrolysis of dUTP to dUMP without releasing the toxic dUTP intermediate. This Leptospira borgpetersenii serovar Hardjo-bovis (strain JB197) protein is dCTP deaminase, dUMP-forming.